The chain runs to 490 residues: Solute carrier family 2, facilitated glucose transporter member 1 (490 aa).

Residues Met-1–Arg-10 lie on the Cytoplasmic side of the membrane. The chain crosses the membrane as a helical span at residues Leu-11–Ile-32. Topologically, residues Asn-33–Ser-65 are extracellular. N-linked (GlcNAc...) asparagine glycosylation occurs at Asn-44. Residues Leu-66 to Val-86 traverse the membrane as a helical segment. The Cytoplasmic portion of the chain corresponds to Asn-87–Phe-89. Residues Gly-90–Phe-111 traverse the membrane as a helical segment. Residues Ser-112–Glu-119 are Extracellular-facing. The chain crosses the membrane as a helical span at residues Met-120–Val-143. At Gly-144 to Ala-154 the chain is on the cytoplasmic side. A helical membrane pass occupies residues Leu-155–Leu-175. A D-glucose-binding site is contributed by Gln-160. At Asp-176 to Leu-184 the chain is on the extracellular side. The chain crosses the membrane as a helical span at residues Trp-185–Phe-205. The Cytoplasmic portion of the chain corresponds to Ala-206 to Pro-270. The helical transmembrane segment at Ile-271–Tyr-292 threads the bilayer. D-glucose-binding positions include Gln-281–Gln-282 and Asn-287. At Ser-293 to Pro-305 the chain is on the extracellular side. The helical transmembrane segment at Val-306–Val-327 threads the bilayer. Asn-316 is a D-glucose binding site. Residues Glu-328–Arg-333 are Cytoplasmic-facing. A helical transmembrane segment spans residues Thr-334–Leu-354. Over Thr-355–Ser-364 the chain is Extracellular. Residues Tyr-365 to Trp-387 form a helical membrane-spanning segment. D-glucose is bound by residues Glu-379 and Trp-387. Residues Phe-388–Pro-400 lie on the Cytoplasmic side of the membrane. The helical transmembrane segment at Ala-401–Phe-421 threads the bilayer. Topologically, residues Gln-422–Cys-428 are extracellular. A helical membrane pass occupies residues Gly-429–Phe-449. Topologically, residues Lys-450–Val-490 are cytoplasmic. The segment at Gly-470 to Val-490 is disordered.

This sequence belongs to the major facilitator superfamily. Sugar transporter (TC 2.A.1.1) family. Glucose transporter subfamily. In terms of assembly, interacts with isoform 1 of BSG. Retinal cones (at protein level).

It is found in the cell membrane. Its subcellular location is the photoreceptor inner segment. The catalysed reaction is D-glucose(out) = D-glucose(in). Functionally, facilitative glucose transporter, which is responsible for constitutive or basal glucose uptake. Has a very broad substrate specificity; can transport a wide range of aldoses including both pentoses and hexoses. Most important energy carrier of the brain: present at the blood-brain barrier and assures the energy-independent, facilitative transport of glucose into the brain. In association with BSG and NXNL1, promotes retinal cone survival by increasing glucose uptake into photoreceptors. Required for mesendoderm differentiation. The chain is Solute carrier family 2, facilitated glucose transporter member 1 from Gallus gallus (Chicken).